Here is a 356-residue protein sequence, read N- to C-terminus: Peptide chain release factor 1 (356 aa).

Position 233 is an N5-methylglutamine (Q233).

It belongs to the prokaryotic/mitochondrial release factor family. In terms of processing, methylated by PrmC. Methylation increases the termination efficiency of RF1.

The protein resides in the cytoplasm. In terms of biological role, peptide chain release factor 1 directs the termination of translation in response to the peptide chain termination codons UAG and UAA. This chain is Peptide chain release factor 1, found in Halalkalibacterium halodurans (strain ATCC BAA-125 / DSM 18197 / FERM 7344 / JCM 9153 / C-125) (Bacillus halodurans).